The primary structure comprises 240 residues: Probable septum site-determining protein MinC (240 aa).

This sequence belongs to the MinC family. Interacts with MinD and FtsZ.

Its function is as follows. Cell division inhibitor that blocks the formation of polar Z ring septums. Rapidly oscillates between the poles of the cell to destabilize FtsZ filaments that have formed before they mature into polar Z rings. Prevents FtsZ polymerization. The chain is Probable septum site-determining protein MinC from Acinetobacter baylyi (strain ATCC 33305 / BD413 / ADP1).